Reading from the N-terminus, the 450-residue chain is Probable transporter MCH1 (450 aa).

12 helical membrane passes run 32–52 (AFLVALCACIPAGFISQISLY), 69–89 (VLFSAVNLGGYITPPLLGLLS), 96–116 (MLSWLSFVGFVPTYAYAAWVF), 127–147 (VLCFTLIGISTNALYFSALFT), 157–177 (LCSISLPATFYGMASVLGSQL), 199–219 (LAVAYTLISFCMWFATSIVTM), 255–275 (PAAYFMALVLLLSLGPMEMFL), 290–309 (VLPEFAIASTCSRFLSGLII), 320–340 (MSVQWAVLLLGVVGQWIVVLA), 355–375 (LSGACYGGLFTVSPILTLAVW), 378–398 (AVFGTAYGSFMITPAVGSILF), and 423–443 (VFWSSTSALAIALLFSVLMYL).

This sequence belongs to the major facilitator superfamily.

It localises to the vacuole membrane. Its function is as follows. Probable transporter. The polypeptide is Probable transporter MCH1 (MCH1) (Eremothecium gossypii (strain ATCC 10895 / CBS 109.51 / FGSC 9923 / NRRL Y-1056) (Yeast)).